The primary structure comprises 147 residues: Protein YjdN (147 aa).

In Escherichia coli (strain K12), this protein is Protein YjdN (yjdN).